Consider the following 257-residue polypeptide: Acetyl-coenzyme A carboxylase carboxyl transferase subunit beta (257 aa).

One can recognise a CoA carboxyltransferase N-terminal domain in the interval 5 to 257 (VFTKCERCKQ…DLERLLGFVG (253 aa)). Zn(2+) contacts are provided by cysteine 9, cysteine 12, cysteine 28, and cysteine 31. The C4-type zinc-finger motif lies at 9 to 31 (CERCKQPVYEKDLRARFNVCPNC).

This sequence belongs to the AccD/PCCB family. In terms of assembly, acetyl-CoA carboxylase is a heterohexamer composed of biotin carboxyl carrier protein (AccB), biotin carboxylase (AccC) and two subunits each of ACCase subunit alpha (AccA) and ACCase subunit beta (AccD). Requires Zn(2+) as cofactor.

It localises to the cytoplasm. It carries out the reaction N(6)-carboxybiotinyl-L-lysyl-[protein] + acetyl-CoA = N(6)-biotinyl-L-lysyl-[protein] + malonyl-CoA. It functions in the pathway lipid metabolism; malonyl-CoA biosynthesis; malonyl-CoA from acetyl-CoA: step 1/1. Its function is as follows. Component of the acetyl coenzyme A carboxylase (ACC) complex. Biotin carboxylase (BC) catalyzes the carboxylation of biotin on its carrier protein (BCCP) and then the CO(2) group is transferred by the transcarboxylase to acetyl-CoA to form malonyl-CoA. The protein is Acetyl-coenzyme A carboxylase carboxyl transferase subunit beta of Rubrobacter xylanophilus (strain DSM 9941 / JCM 11954 / NBRC 16129 / PRD-1).